Here is a 376-residue protein sequence, read N- to C-terminus: 23S rRNA (uracil(747)-C(5))-methyltransferase RlmC (376 aa).

Residues Cys-3, Cys-11, Cys-14, and Cys-87 each contribute to the [4Fe-4S] cluster site. Residues Gln-212, Phe-241, Glu-262, and Asn-307 each contribute to the S-adenosyl-L-methionine site. Residue Cys-334 is the Nucleophile of the active site.

This sequence belongs to the class I-like SAM-binding methyltransferase superfamily. RNA M5U methyltransferase family. RlmC subfamily.

It catalyses the reaction uridine(747) in 23S rRNA + S-adenosyl-L-methionine = 5-methyluridine(747) in 23S rRNA + S-adenosyl-L-homocysteine + H(+). In terms of biological role, catalyzes the formation of 5-methyl-uridine at position 747 (m5U747) in 23S rRNA. In Salmonella newport (strain SL254), this protein is 23S rRNA (uracil(747)-C(5))-methyltransferase RlmC.